Consider the following 320-residue polypeptide: rRNA 2'-O-methyltransferase fibrillarin 2 (320 aa).

The interval 1-79 is disordered; the sequence is MRPPLTGSGG…GRGGMKGGSK (79 aa). 2 stretches are compositionally biased toward gly residues: residues 7–44 and 57–76; these read GSGG…GGRG and PPRG…GMKG. Residues 167-168, 186-187, 211-212, and 231-234 contribute to the S-adenosyl-L-methionine site; these read TT, EF, DA, and DVAQ.

Belongs to the methyltransferase superfamily. Fibrillarin family. As to quaternary structure, component of box C/D small nucleolar ribonucleoprotein (snoRNP) particles. Interacts with groundnut rosette virus long-distance movement protein; this interaction is required for virus long-distance movement protein transiting through host Cajal body and nucleolus, relocalization of fibrillarin to the cytoplasm, and in presence of viral RNA, leads to the formation of stable RNPs. Interacts (via GAR domain) with the hordeivirus TGB1 movement protein (via the first 82 amino acid residues). Interacts with PRMT11 and PRMT12. Interacts with MED19A. In terms of processing, methylated by PRMT11 and PRMT12. As to expression, expressed in roots and flowers. Expressed in leaves and stems. Expression levels decrease during aging.

The protein localises to the nucleus. It localises to the nucleolus. It carries out the reaction a ribonucleotide in rRNA + S-adenosyl-L-methionine = a 2'-O-methylribonucleotide in rRNA + S-adenosyl-L-homocysteine + H(+). It catalyses the reaction L-glutaminyl-[histone H2A] + S-adenosyl-L-methionine = N(5)-methyl-L-glutaminyl-[histone H2A] + S-adenosyl-L-homocysteine + H(+). S-adenosyl-L-methionine-dependent methyltransferase that has the ability to methylate both RNAs and proteins. Involved in pre-rRNA processing. Utilizes the methyl donor S-adenosyl-L-methionine to catalyze the site-specific 2'-hydroxyl methylation of ribose moieties in pre-ribosomal RNA. Site specificity is provided by a guide RNA that base pairs with the substrate. Methylation occurs at a characteristic distance from the sequence involved in base pairing with the guide RNA. Also acts as a protein methyltransferase by mediating methylation of 'Gln-105' of histone H2A (H2AQ105me), a modification that impairs binding of the FACT complex and is specifically present at 35S ribosomal DNA locus. Acts as a negative regulator of expression of immune responsive genes, including pathogenesis-related gene 1 (PR1), and of resistance against bacterial pathogen. Binds to MED19A, a positive regulator of PR1 expression, to repress the activator activity of MED19A. In response to the bacterial pathogen-associated molecular pattern (PAMP) elf18, associates with the long non-coding RNA (lncRNA) ELENA1 (At4g16355), and releases its repression of MED19A. Possesses ribonuclease activity toward rRNA in vitro. Binds phosphoinositides, phospholipids and phosphatidic acid in vitro. This Arabidopsis thaliana (Mouse-ear cress) protein is rRNA 2'-O-methyltransferase fibrillarin 2.